Here is a 59-residue protein sequence, read N- to C-terminus: Large ribosomal subunit protein bL32 (59 aa).

A disordered region spans residues Met1–Asp20. Residues Lys7–His19 are compositionally biased toward basic residues.

This sequence belongs to the bacterial ribosomal protein bL32 family.

This Nitratidesulfovibrio vulgaris (strain DSM 19637 / Miyazaki F) (Desulfovibrio vulgaris) protein is Large ribosomal subunit protein bL32.